Consider the following 1776-residue polypeptide: 6-methylsalicylic acid synthase (1776 aa).

Residues 1–18 show a composition bias toward low complexity; that stretch reads MHSVSPSTYPSGGTSPAP. Residues 1 to 26 form a disordered region; the sequence is MHSVSPSTYPSGGTSPAPADTPGTEY. The Ketosynthase family 3 (KS3) domain occupies 32-457; it reads SNDVAVVGMA…GTVSHAVIEE (426 aa). Active-site for beta-ketoacyl synthase activity residues include C204, H339, and H379. The segment at 567-880 is malonyl-CoA:ACP transacylase (MAT) domain; sequence VWVFSGHGAQ…IAQLHCRGAE (314 aa). An N-terminal hotdog fold region spans residues 925–1044; it reads HTLLGQRIPV…AYWDRKVLGS (120 aa). Residues 925 to 1196 are dehydratase (DH) domain; the sequence is HTLLGQRIPV…FTAMRFSEIE (272 aa). Residues 925-1201 enclose the PKS/mFAS DH domain; it reads HTLLGQRIPV…FSEIEGTPGV (277 aa). The active-site Proton acceptor; for dehydratase activity is H957. The interval 1058 to 1201 is C-terminal hotdog fold; sequence TTKLADNFSI…FSEIEGTPGV (144 aa). Residue D1113 is the Proton donor; for dehydratase activity of the active site. The product template (PT) domain stretch occupies residues 1205–1657; the sequence is MESLVHQIAW…LRSLAIDDGE (453 aa). Residues 1700–1774 form the Carrier domain; the sequence is AYLDEKIRGC…HLVVWFAEKI (75 aa). Residue S1734 is modified to O-(pantetheine 4'-phosphoryl)serine.

It is found in the cytoplasm. The protein resides in the cytosol. The catalysed reaction is 3 malonyl-CoA + acetyl-CoA + NADPH + 3 H(+) = 6-methylsalicylate + 3 CO2 + NADP(+) + 4 CoA + H2O. It functions in the pathway mycotoxin biosynthesis; patulin biosynthesis. Its function is as follows. 6-methylsalicylic acid synthase; part of the gene cluster that mediates the biosynthesis of patulin, an acetate-derived tetraketide mycotoxin produced by several fungal species that shows antimicrobial properties against several bacteria. PatK catalyzes the first step of the pathway which is the synthesis of 6-methylsalicylic acid via condensation of 1 acetate and 3 malonate units. The pathway begins with the synthesis of 6-methylsalicylic acid by the polyketide synthase (PKS) patK via condensation of acetate and malonate units. The 6-methylsalicylic acid decarboxylase patG then catalyzes the decarboxylation of 6-methylsalicylic acid to yield m-cresol (also known as 3-methylphenol). These first reactions occur in the cytosol. The intermediate m-cresol is then transported into the endoplasmic reticulum where the cytochrome P450 monooxygenase patH converts it to m-hydroxybenzyl alcohol, which is further converted to gentisyl alcohol by the cytochrome P450 monooxygenase patI. The oxidoreductases patJ and patO further convert gentisyl alcohol to isoepoxydon in the vacuole. PatN catalyzes then the transformation of isoepoxydon into phyllostine. The cluster protein patF is responsible for the conversion from phyllostine to neopatulin whereas the alcohol dehydrogenase patD converts neopatulin to E-ascladiol. The steps between isoepoxydon and E-ascladiol occur in the cytosol, and E-ascladiol is probably secreted to the extracellular space by one of the cluster-specific transporters patC or patM. Finally, the secreted patulin synthase patE catalyzes the conversion of E-ascladiol to patulin. This Penicillium expansum (Blue mold rot fungus) protein is 6-methylsalicylic acid synthase.